A 216-amino-acid chain; its full sequence is Thymidylate kinase (216 aa).

10 to 17 is an ATP binding site; sequence GPDGAGKS.

This sequence belongs to the thymidylate kinase family.

The enzyme catalyses dTMP + ATP = dTDP + ADP. Its function is as follows. Phosphorylation of dTMP to form dTDP in both de novo and salvage pathways of dTTP synthesis. This is Thymidylate kinase from Lactobacillus acidophilus (strain ATCC 700396 / NCK56 / N2 / NCFM).